Reading from the N-terminus, the 622-residue chain is Low affinity potassium transport system protein Kup (622 aa).

Transmembrane regions (helical) follow at residues 9-29 (LSAVTLAAIGVVYGDIGTSPL), 46-66 (PDVVFGFLSLIFWMLILVVSV), 101-121 (ILVVLGLIGGSFFYGEVVITP), 137-157 (PALDPYIVPCSIAVLTLLFVI), 165-185 (VGKLFAPVMLVWFLTLALLGL), 213-233 (VSFFALGAVVLAITGVEALYA), 247-267 (WFTVVLPSLVLNYFGQGALLL), 276-296 (PFFLLAPDWALIPLLILATLA), 337-357 (IYIPVINWTLYLAVVLVIIGF), 363-383 (LAAAYGIAVTGTMVITSILFC), 395-415 (FLVAFLLMVLLIIDIPMFSAN), and 416-436 (VLKLFSGGWLPLSLGLVMFII).

The protein belongs to the HAK/KUP transporter (TC 2.A.72) family.

It is found in the cell inner membrane. It carries out the reaction K(+)(in) + H(+)(in) = K(+)(out) + H(+)(out). Functionally, responsible for the low-affinity transport of potassium into the cell. Likely operates as a K(+):H(+) symporter. In Yersinia pseudotuberculosis serotype O:1b (strain IP 31758), this protein is Low affinity potassium transport system protein Kup.